The chain runs to 160 residues: Cytochrome b6-f complex subunit 4 (160 aa).

Transmembrane regions (helical) follow at residues 36 to 56, 95 to 115, and 131 to 151; these read LLYI…GLAV, LLGV…PFLE, and TVFL…TLPI.

This sequence belongs to the cytochrome b family. PetD subfamily. The 4 large subunits of the cytochrome b6-f complex are cytochrome b6, subunit IV (17 kDa polypeptide, petD), cytochrome f and the Rieske protein, while the 4 small subunits are petG, petL, petM and petN. The complex functions as a dimer.

The protein localises to the plastid. The protein resides in the chloroplast thylakoid membrane. Its function is as follows. Component of the cytochrome b6-f complex, which mediates electron transfer between photosystem II (PSII) and photosystem I (PSI), cyclic electron flow around PSI, and state transitions. This is Cytochrome b6-f complex subunit 4 from Oryza sativa (Rice).